We begin with the raw amino-acid sequence, 123 residues long: Ribosome-binding factor A (123 aa).

This sequence belongs to the RbfA family. As to quaternary structure, monomer. Binds 30S ribosomal subunits, but not 50S ribosomal subunits or 70S ribosomes.

The protein localises to the cytoplasm. In terms of biological role, one of several proteins that assist in the late maturation steps of the functional core of the 30S ribosomal subunit. Associates with free 30S ribosomal subunits (but not with 30S subunits that are part of 70S ribosomes or polysomes). Required for efficient processing of 16S rRNA. May interact with the 5'-terminal helix region of 16S rRNA. The sequence is that of Ribosome-binding factor A from Solibacter usitatus (strain Ellin6076).